Here is a 110-residue protein sequence, read N- to C-terminus: Minor capsid protein VP2 (110 aa).

This sequence belongs to the vesivirus VP2 protein family. Homooligomer. The portal-like structure consists in 12 copies of VP2. Interacts with capsid protein VP1.

Its subcellular location is the virion. It localises to the host cytoplasm. Its function is as follows. Minor structural protein that forms a portal-like structure at a unique three-fold axis of symmetry, following binding to the host receptor. The channel formed by VP2 may allow the delivery of the viral genome through the host endosomal membrane. The sequence is that of Minor capsid protein VP2 from Otariidae (fur seals &amp; sea lions).